The sequence spans 1442 residues: Sulfite reductase [NADPH] subunit beta (1442 aa).

The Flavodoxin-like domain occupies 682-831 (LHVYYASDGG…AYSEWEPKLW (150 aa)). Residue Ser903 is modified to Phosphoserine. The [4Fe-4S] cluster site is built by Cys1300, Cys1306, Cys1345, and Cys1349. Residue Cys1349 coordinates siroheme.

This sequence belongs to the nitrite and sulfite reductase 4Fe-4S domain family. In terms of assembly, alpha(2)-beta(2). The alpha component is a flavoprotein, the beta component is a hemoprotein. It depends on siroheme as a cofactor. The cofactor is [4Fe-4S] cluster.

Its subcellular location is the cytoplasm. It catalyses the reaction hydrogen sulfide + 3 NADP(+) + 3 H2O = sulfite + 3 NADPH + 4 H(+). It functions in the pathway sulfur metabolism; hydrogen sulfide biosynthesis; hydrogen sulfide from sulfite (NADPH route): step 1/1. Its function is as follows. Catalyzes the reduction of sulfite to sulfide, one of several activities required for the biosynthesis of L-cysteine from sulfate. In Saccharomyces cerevisiae (strain ATCC 204508 / S288c) (Baker's yeast), this protein is Sulfite reductase [NADPH] subunit beta (MET5).